The sequence spans 317 residues: Apolipoprotein E (317 aa).

A signal peptide spans methionine 1–alanine 18. 8 consecutive repeat copies span residues threonine 80–serine 101, proline 102–glycine 123, alanine 124–glycine 145, glutamine 146–leucine 167, arginine 168–glutamate 189, arginine 190–alanine 211, threonine 212–arginine 233, and alanine 234–alanine 255. The segment at threonine 80–alanine 255 is 8 X 22 AA approximate tandem repeats. Methionine 143 carries the methionine sulfoxide modification. The residue at position 147 (serine 147) is a Phosphoserine. The segment at histidine 158–arginine 168 is LDL and other lipoprotein receptors binding. Leucine 162 to arginine 165 contacts heparin. A lipid-binding and lipoprotein association region spans residues alanine 210 to methionine 290. Glycine 229 to methionine 236 provides a ligand contact to heparin. The segment at glutamine 266–histidine 317 is homooligomerization. The specificity for association with VLDL stretch occupies residues arginine 278–methionine 290.

The protein belongs to the apolipoprotein A1/A4/E family. In terms of assembly, homotetramer. May interact with ABCA1; functionally associated with ABCA1 in the biogenesis of HDLs. May interact with APP/A4 amyloid-beta peptide; the interaction is extremely stable in vitro but its physiological significance is unclear. May interact with MAPT. May interact with MAP2. In the cerebrospinal fluid, interacts with secreted SORL1. Interacts with PMEL; this allows the loading of PMEL luminal fragment on ILVs to induce fibril nucleation. In terms of processing, APOE exists as multiple glycosylated and sialylated glycoforms within cells and in plasma. The extent of glycosylation and sialylation are tissue and context specific. Glycated in plasma VLDL. Post-translationally, phosphorylated by FAM20C in the extracellular medium.

The protein resides in the secreted. It localises to the extracellular space. Its subcellular location is the extracellular matrix. It is found in the extracellular vesicle. The protein localises to the endosome. The protein resides in the multivesicular body. Its function is as follows. APOE is an apolipoprotein, a protein associating with lipid particles, that mainly functions in lipoprotein-mediated lipid transport between organs via the plasma and interstitial fluids. APOE is a core component of plasma lipoproteins and is involved in their production, conversion and clearance. Apolipoproteins are amphipathic molecules that interact both with lipids of the lipoprotein particle core and the aqueous environment of the plasma. As such, APOE associates with chylomicrons, chylomicron remnants, very low density lipoproteins (VLDL) and intermediate density lipoproteins (IDL) but shows a preferential binding to high-density lipoproteins (HDL). It also binds a wide range of cellular receptors including the LDL receptor/LDLR, the LDL receptor-related proteins LRP1, LRP2 and LRP8 and the very low-density lipoprotein receptor/VLDLR that mediate the cellular uptake of the APOE-containing lipoprotein particles. Finally, APOE also has a heparin-binding activity and binds heparan-sulfate proteoglycans on the surface of cells, a property that supports the capture and the receptor-mediated uptake of APOE-containing lipoproteins by cells. A main function of APOE is to mediate lipoprotein clearance through the uptake of chylomicrons, VLDLs, and HDLs by hepatocytes. APOE is also involved in the biosynthesis by the liver of VLDLs as well as their uptake by peripheral tissues ensuring the delivery of triglycerides and energy storage in muscle, heart and adipose tissues. By participating in the lipoprotein-mediated distribution of lipids among tissues, APOE plays a critical role in plasma and tissues lipid homeostasis. APOE is also involved in two steps of reverse cholesterol transport, the HDLs-mediated transport of cholesterol from peripheral tissues to the liver, and thereby plays an important role in cholesterol homeostasis. First, it is functionally associated with ABCA1 in the biogenesis of HDLs in tissues. Second, it is enriched in circulating HDLs and mediates their uptake by hepatocytes. APOE also plays an important role in lipid transport in the central nervous system, regulating neuron survival and sprouting. The chain is Apolipoprotein E (APOE) from Macaca fascicularis (Crab-eating macaque).